Consider the following 151-residue polypeptide: Small heat shock protein HspD (151 aa).

A sHSP domain is found at R28–A138.

It belongs to the small heat shock protein (HSP20) family.

This is Small heat shock protein HspD (hspD) from Bradyrhizobium diazoefficiens (strain JCM 10833 / BCRC 13528 / IAM 13628 / NBRC 14792 / USDA 110).